Consider the following 187-residue polypeptide: Putative manganese efflux pump MntP (187 aa).

6 consecutive transmembrane segments (helical) span residues 3–23 (FYSL…VSLC), 35–55 (HYLI…TIGY), 56–76 (FIGI…AFIL), 107–127 (LALA…FAFL), 129–149 (VNLL…CIIA), and 166–186 (LLGG…HLFF).

This sequence belongs to the MntP (TC 9.B.29) family.

The protein resides in the cell inner membrane. In terms of biological role, probably functions as a manganese efflux pump. The polypeptide is Putative manganese efflux pump MntP (Campylobacter jejuni (strain RM1221)).